The chain runs to 152 residues: Deoxyuridine 5'-triphosphate nucleotidohydrolase (152 aa).

Residues 71-73, asparagine 84, 88-90, and methionine 98 each bind substrate; these read RSG and LID.

The protein belongs to the dUTPase family. As to quaternary structure, homotrimer. It depends on Mg(2+) as a cofactor.

It carries out the reaction dUTP + H2O = dUMP + diphosphate + H(+). Its pathway is pyrimidine metabolism; dUMP biosynthesis; dUMP from dCTP (dUTP route): step 2/2. This enzyme is involved in nucleotide metabolism: it produces dUMP, the immediate precursor of thymidine nucleotides and it decreases the intracellular concentration of dUTP so that uracil cannot be incorporated into DNA. This is Deoxyuridine 5'-triphosphate nucleotidohydrolase from Escherichia coli O1:K1 / APEC.